A 74-amino-acid polypeptide reads, in one-letter code: uncharacterized protein (74 aa).

A disordered region spans residues 39–74 (SSPQAPGTLKPRALVRPSPGPVQENHLSEAQFPPKL).

This is an uncharacterized protein from Homo sapiens (Human).